The sequence spans 154 residues: Transcription antitermination protein NusB (154 aa).

The protein belongs to the NusB family.

Functionally, involved in transcription antitermination. Required for transcription of ribosomal RNA (rRNA) genes. Binds specifically to the boxA antiterminator sequence of the ribosomal RNA (rrn) operons. The chain is Transcription antitermination protein NusB from Desulfosudis oleivorans (strain DSM 6200 / JCM 39069 / Hxd3) (Desulfococcus oleovorans).